We begin with the raw amino-acid sequence, 212 residues long: Protein DEPP1 (212 aa).

Disordered stretches follow at residues 20 to 39 (EEMLLGGPGQEPPPSPSLDD), 49 to 79 (QPTSVLDKATAQGQPRPPHRPAQACRKGRPA), and 113 to 176 (QEKQ…SDLR). The span at 113–124 (QEKQPSQRDLPR) shows a compositional bias: basic and acidic residues.

Expressed in various tissues, including pancreas, placenta, ovary, testis and kidney.

It is found in the cytoplasm. Its subcellular location is the peroxisome. The protein localises to the mitochondrion. In terms of biological role, acts as a critical modulator of FOXO3-induced autophagy via increased cellular ROS. This chain is Protein DEPP1, found in Homo sapiens (Human).